A 333-amino-acid chain; its full sequence is MQHNQLLEQLYSGHSLSTSESTALFNAVIQGELSNEQIAAMLIALKVRGANTEEISGAVAASLQNAKAFPYPNYPFADIVGTGGNGQNTINISTTSAIVAASMGAKIAKHGNRSVSSKSGASDVLTALSVNVNVTPEQARQALDEIGVCFLFAQQYHSGFRHVAPVRAALKTRTIFNILGPLINPARPTYHLLGVYAPELVKTYAETAVALEHQHSFVVHGSGLDEVALHGETQVAEIKNGKIEYFTLTPEDFGLKTQSLESLRGGEPQENAQYLTALLQGKGKAEHANAVAANTALLLKLFGYDDLKQNVQNVLAHLVSGKAFETLQKLTTY.

5-phospho-alpha-D-ribose 1-diphosphate contacts are provided by residues glycine 81, glycine 84–asparagine 85, threonine 89, asparagine 91–threonine 94, lysine 109–serine 117, and alanine 121. Glycine 81 is a binding site for anthranilate. Residue serine 93 coordinates Mg(2+). Asparagine 112 contributes to the anthranilate binding site. Arginine 167 contributes to the anthranilate binding site. The Mg(2+) site is built by aspartate 225 and glutamate 226.

The protein belongs to the anthranilate phosphoribosyltransferase family. As to quaternary structure, homodimer. Requires Mg(2+) as cofactor.

The catalysed reaction is N-(5-phospho-beta-D-ribosyl)anthranilate + diphosphate = 5-phospho-alpha-D-ribose 1-diphosphate + anthranilate. It participates in amino-acid biosynthesis; L-tryptophan biosynthesis; L-tryptophan from chorismate: step 2/5. Its function is as follows. Catalyzes the transfer of the phosphoribosyl group of 5-phosphorylribose-1-pyrophosphate (PRPP) to anthranilate to yield N-(5'-phosphoribosyl)-anthranilate (PRA). The protein is Anthranilate phosphoribosyltransferase of Haemophilus influenzae (strain ATCC 51907 / DSM 11121 / KW20 / Rd).